A 131-amino-acid polypeptide reads, in one-letter code: MSWQAYVDEHLMCEIEGHHLAAAAIVGHDGAAWAQSTAFPEFKTEDMANIMKDFDEPGHLAPTGLFLGPTKYMVIQGEPGAVIRGKKGSGGITVKKTGQALVVGIYDEPMTPGQCNMVVERLGDYLLEQGM.

Cys13 and Cys115 are oxidised to a cystine. Positions 81–97 (AVIRGKKGSGGITVKKT) match the Involved in PIP2 interaction motif. The residue at position 111 (Thr111) is a Phosphothreonine.

Belongs to the profilin family. Occurs in many kinds of cells as a complex with monomeric actin in a 1:1 ratio. Post-translationally, phosphorylated by MAP kinases. As to expression, pollen specific.

It localises to the cytoplasm. The protein localises to the cytoskeleton. Its function is as follows. Binds to actin and affects the structure of the cytoskeleton. At high concentrations, profilin prevents the polymerization of actin, whereas it enhances it at low concentrations. By binding to PIP2, it inhibits the formation of IP3 and DG. This chain is Profilin-2 (PRO2), found in Zea mays (Maize).